Consider the following 118-residue polypeptide: Large ribosomal subunit protein bL19 (118 aa).

The protein belongs to the bacterial ribosomal protein bL19 family.

In terms of biological role, this protein is located at the 30S-50S ribosomal subunit interface and may play a role in the structure and function of the aminoacyl-tRNA binding site. This Lactiplantibacillus plantarum (strain ATCC BAA-793 / NCIMB 8826 / WCFS1) (Lactobacillus plantarum) protein is Large ribosomal subunit protein bL19.